The primary structure comprises 237 residues: Phosphoadenosine 5'-phosphosulfate reductase (237 aa).

Cysteine 231 acts as the Nucleophile; cysteine thiosulfonate intermediate in catalysis.

Belongs to the PAPS reductase family. CysH subfamily.

It localises to the cytoplasm. The enzyme catalyses [thioredoxin]-disulfide + sulfite + adenosine 3',5'-bisphosphate + 2 H(+) = [thioredoxin]-dithiol + 3'-phosphoadenylyl sulfate. It participates in sulfur metabolism; hydrogen sulfide biosynthesis; sulfite from sulfate: step 3/3. Catalyzes the formation of sulfite from phosphoadenosine 5'-phosphosulfate (PAPS) using thioredoxin as an electron donor. This Xylella fastidiosa (strain 9a5c) protein is Phosphoadenosine 5'-phosphosulfate reductase.